The sequence spans 426 residues: Chaperone SurA (426 aa).

The first 13 residues, 1 to 13 (MLGALFLSTAASA), serve as a signal peptide directing secretion. PpiC domains lie at 164–265 (SEEL…KLLD) and 274–373 (RDEV…EVLG).

It is found in the periplasm. The catalysed reaction is [protein]-peptidylproline (omega=180) = [protein]-peptidylproline (omega=0). Chaperone involved in the correct folding and assembly of outer membrane proteins. Recognizes specific patterns of aromatic residues and the orientation of their side chains, which are found more frequently in integral outer membrane proteins. May act in both early periplasmic and late outer membrane-associated steps of protein maturation. The sequence is that of Chaperone SurA from Pseudomonas fluorescens (strain ATCC BAA-477 / NRRL B-23932 / Pf-5).